The following is a 256-amino-acid chain: Indole-3-glycerol phosphate synthase (256 aa).

It belongs to the TrpC family.

It catalyses the reaction 1-(2-carboxyphenylamino)-1-deoxy-D-ribulose 5-phosphate + H(+) = (1S,2R)-1-C-(indol-3-yl)glycerol 3-phosphate + CO2 + H2O. The protein operates within amino-acid biosynthesis; L-tryptophan biosynthesis; L-tryptophan from chorismate: step 4/5. The protein is Indole-3-glycerol phosphate synthase of Caldanaerobacter subterraneus subsp. tengcongensis (strain DSM 15242 / JCM 11007 / NBRC 100824 / MB4) (Thermoanaerobacter tengcongensis).